A 268-amino-acid polypeptide reads, in one-letter code: Taurine import ATP-binding protein TauB (268 aa).

In terms of domain architecture, ABC transporter spans 4–236 (LSINNLSMRF…LGVDSDLREV (233 aa)). 41 to 48 (GPSGCGKT) is an ATP binding site.

The protein belongs to the ABC transporter superfamily. Taurine importer (TC 3.A.1.17.1) family. As to quaternary structure, the complex is composed of two ATP-binding proteins (TauB), two transmembrane proteins (TauC) and a solute-binding protein (TauA).

The protein localises to the cell inner membrane. It carries out the reaction taurine(out) + ATP + H2O = taurine(in) + ADP + phosphate + H(+). Functionally, part of the ABC transporter complex TauABC involved in taurine import. Responsible for energy coupling to the transport system. This is Taurine import ATP-binding protein TauB from Roseobacter denitrificans (strain ATCC 33942 / OCh 114) (Erythrobacter sp. (strain OCh 114)).